A 576-amino-acid chain; its full sequence is Calmodulin-binding protein 60 B (576 aa).

Residues 1–25 (MMLPTKRPAPDHGDDERNEVMVPEP) are disordered. Residues 1–80 (MMLPTKRPAP…HPSSRPSLNR (80 aa)) form a calmodulin-binding region. Basic and acidic residues predominate over residues 8–25 (PAPDHGDDERNEVMVPEP). The segment at 150-273 (DERQDWTENE…AFHKRLAYKN (124 aa)) is DNA-binding.

Belongs to the plant ACBP60 protein family. (Microbial infection) Interacts with V.dahliae SCP41. In terms of assembly, interacts with calmodulin (CaM).

The protein resides in the nucleus. In terms of biological role, transcription activator that binds DNA in a sequence-specific manner, likely 5'-GAAATTTTGG-3', to promote the expression of target genes. Required for pathogen resistance. The protein is Calmodulin-binding protein 60 B of Gossypium hirsutum (Upland cotton).